A 622-amino-acid polypeptide reads, in one-letter code: Basal cell adhesion molecule (622 aa).

Residues 1 to 25 (MEPPDARAGLLWLTFLLSGYSGAQA) form the signal peptide. 2 consecutive Ig-like V-type domains span residues 26-135 (ELHV…SSVR) and 140-250 (PEDT…HTFR). The Extracellular segment spans residues 26 to 541 (ELHVSVPPRV…GSVAPQTAQA (516 aa)). 3 disulfide bridges follow: Cys47-Cys118, Cys165-Cys230, and Cys284-Cys330. Ig-like C2-type domains follow at residues 267-342 (PSTT…EEVQ), 356-435 (PLEL…QSFQ), and 442-532 (PELK…FHFG). N-linked (GlcNAc...) asparagine glycans are attached at residues Asn314, Asn323, Asn370, and Asn377. Disulfide bonds link Cys378–Cys418 and Cys467–Cys516. A helical transmembrane segment spans residues 542–562 (GVAVMAVAVSVGLLLLVVAAF). At 563–622 (YCMRRKGRPGCCRRAEKGAPPAREPELSHSGSERPEHTGLLMGGPSGGGRGGSGGFGDEC) the chain is on the cytoplasmic side. The disordered stretch occupies residues 574 to 622 (CRRAEKGAPPAREPELSHSGSERPEHTGLLMGGPSGGGRGGSGGFGDEC). Basic and acidic residues predominate over residues 575 to 599 (RRAEKGAPPAREPELSHSGSERPEH). 4 positions are modified to phosphoserine: Ser590, Ser592, Ser594, and Ser615. The span at 603 to 622 (LMGGPSGGGRGGSGGFGDEC) shows a compositional bias: gly residues.

Homodimer. Interacts with ITGA4:ITGB1. Interacts with spectrins SPTA1 and SPTB1. In terms of processing, epinephrine-stimulated phosphorylation of Ser-615 by PKA enhances adhesion to laminin. Ser-615 can also be phosphorylated by AKT1.

The protein localises to the cell membrane. In terms of biological role, transmembrane glycoprotein that functions as both a receptor and an adhesion molecule playing a crucial role in cell adhesion, motility, migration and invasion. Extracellular domain enables binding to extracellular matrix proteins, such as laminin, integrin and other ligands while its intracellular domain interacts with cytoskeletal proteins like hemoglobin, facilitating cell signal transduction. Serves as a receptor for laminin alpha-5/LAMA5 to promote cell adhesion. Mechanistically, JAK2 induces BCAM phosphorylation and activates its adhesion to laminin by stimulating a Rap1/AKT signaling pathway in the absence of EPOR. The protein is Basal cell adhesion molecule (Bcam) of Mus musculus (Mouse).